A 226-amino-acid chain; its full sequence is 2-dehydro-3-deoxy-phosphogluconate aldolase (226 aa).

Glutamate 57 serves as the catalytic Proton acceptor. Positions 61, 85, and 145 each coordinate pyruvate. The active-site Schiff-base intermediate with substrate is the lysine 145.

This sequence belongs to the KHG/KDPG aldolase family. In terms of assembly, homotrimer.

The enzyme catalyses 2-dehydro-3-deoxy-6-phospho-D-gluconate = D-glyceraldehyde 3-phosphate + pyruvate. It participates in carbohydrate acid metabolism; 2-dehydro-3-deoxy-D-gluconate degradation; D-glyceraldehyde 3-phosphate and pyruvate from 2-dehydro-3-deoxy-D-gluconate: step 2/2. Its function is as follows. Involved in the degradation of glucose via the Entner-Doudoroff pathway. Catalyzes the reversible, stereospecific retro-aldol cleavage of 2-keto-3-deoxy-6-phosphogluconate (KDPG) to pyruvate and D-glyceraldehyde-3-phosphate. In Pseudomonas putida (Arthrobacter siderocapsulatus), this protein is 2-dehydro-3-deoxy-phosphogluconate aldolase.